Reading from the N-terminus, the 195-residue chain is Large ribosomal subunit protein eL18 (195 aa).

A Glycyl lysine isopeptide (Lys-Gly) (interchain with G-Cter in SUMO2) cross-link involves residue K126. At S137 the chain carries Phosphoserine. Positions 158–195 (HFGKAPGTPHSHTKPYVRSKGRKFERARGRRASRGYKN) are disordered. T165 is modified (phosphothreonine). 2 stretches are compositionally biased toward basic residues: residues 168–178 (SHTKPYVRSKG) and 185–195 (RGRRASRGYKN). K171 is covalently cross-linked (Glycyl lysine isopeptide (Lys-Gly) (interchain with G-Cter in SUMO2)).

This sequence belongs to the eukaryotic ribosomal protein eL18 family. In terms of assembly, component of the large ribosomal subunit.

It is found in the cytoplasm. It localises to the cytosol. The protein resides in the rough endoplasmic reticulum. Functionally, component of the large ribosomal subunit. The sequence is that of Large ribosomal subunit protein eL18 (RPL18) from Sus scrofa (Pig).